The sequence spans 137 residues: Fibroblast growth factor 2 (137 aa).

Asn-27 provides a ligand contact to heparin. Tyr-73 carries the phosphotyrosine; by TEC modification. Lys-86 is covalently cross-linked (Glycyl lysine isopeptide (Lys-Gly) (interchain with G-Cter in SUMO1)). The tract at residues 119–135 is heparin-binding; the sequence is KRTGQYKLGSKTGPGQK.

The protein belongs to the heparin-binding growth factors family. In terms of assembly, monomer. Homodimer. Interacts with FGFR1, FGFR2, FGFR3 and FGFR4. Affinity between fibroblast growth factors (FGFs) and their receptors is increased by heparan sulfate glycosaminoglycans that function as coreceptors. Interacts with CSPG4, FGFBP1 and TEC. Found in a complex with FGFBP1, FGF1 and FGF2. Interacts with FGFBP3. Interacts with integrin ITGAV:ITGB3; the interaction is required for FGF2 signaling. Interacts with SNORC (via the extracellular domain). Interacts with glypican GPC3. In terms of processing, phosphorylation at Tyr-73 regulates FGF2 unconventional secretion.

It localises to the secreted. Its subcellular location is the nucleus. Its function is as follows. Acts as a ligand for FGFR1, FGFR2, FGFR3 and FGFR4. Also acts as an integrin ligand which is required for FGF2 signaling. Binds to integrin ITGAV:ITGB3. Plays an important role in the regulation of cell survival, cell division, cell differentiation and cell migration. Functions as a potent mitogen in vitro. Can induce angiogenesis. Mediates phosphorylation of ERK1/2 and thereby promotes retinal lens fiber differentiation. The protein is Fibroblast growth factor 2 (FGF2) of Oryctolagus cuniculus (Rabbit).